Here is a 561-residue protein sequence, read N- to C-terminus: MNCLATTIIITCKPTLISDMAVAIDPFSDKFPYFNRSSQRCRLQSLTNLDFNFLAQSFNHTFEDDNIHRSVSSPCFSIAASANMEEDLKATTAPRIEILGGQRVPTVRALVAEVTMAMVSGAQPLLLPSGMGGAYLLQTGKGHNIAVAKPVDEEPLAFNNPKKSGNLMLGQPGMKHSIPVGETGIRELAAYLLDYQGFSGVPPTALVSISHVPFHVSDAFSFSSMPYKVASLQRFVGHDFDAGELGPGSFTATSVHRIGILDVRLLNLDRHAGNMLVKRCDKKEAYNRLGTAELVPIDHGLCLPECLDDPYFEWLNWPQALVPFSDTELDYISNLDPFKDAELLRTELHSLPESAIRVLVVCTVFLKQAAAAGLCLAEIGEKMTRDFSKGEESFSLLETLCTKAKASVFGKTSEDSDYSHEGNEVNTELQCGMFKFDGGDTPCEAEISEVFHVSKPPLVPRGPRANTIPNDVTASMSSSQNQRITHQEKSAKEKKRGGKQERCTVRSKSPPISPNHDESKGVSFVDMTTVEWDTFLQSFQTLLQDALSKGSTPRLGCSCEI.

Positions 121-416 (GAQPLLLPSG…SVFGKTSEDS (296 aa)) constitute a PI3K/PI4K catalytic domain. The segment at 127 to 133 (LPSGMGG) is G-loop. Residues 128 to 134 (PSGMGGA), lysine 149, and 233 to 236 (QRFV) contribute to the ATP site. The segment at 266–274 (LNLDRHAGN) is catalytic loop. The tract at residues 296 to 322 (PIDHGLCLPECLDDPYFEWLNWPQALV) is activation loop. Residue aspartate 298 coordinates ATP. Residues 456 to 520 (PPLVPRGPRA…PISPNHDESK (65 aa)) form a disordered region. Polar residues predominate over residues 467 to 484 (TIPNDVTASMSSSQNQRI).

The protein belongs to the PI3/PI4-kinase family. Type II PI4K subfamily.

The enzyme catalyses a 1,2-diacyl-sn-glycero-3-phospho-(1D-myo-inositol) + ATP = a 1,2-diacyl-sn-glycero-3-phospho-(1D-myo-inositol 4-phosphate) + ADP + H(+). In terms of biological role, the phosphorylation of phosphatidylinositol (PI) to PI4P is the first committed step in the generation of phosphatidylinositol 4,5-bisphosphate (PIP2), a precursor of the second messenger inositol 1,4,5-trisphosphate (InsP3). This is Phosphatidylinositol 4-kinase gamma 1 (PI4KG1) from Arabidopsis thaliana (Mouse-ear cress).